The sequence spans 170 residues: Ureidoglycolate lyase 1 (170 aa).

It belongs to the ureidoglycolate lyase family. As to quaternary structure, homodimer. Requires Ni(2+) as cofactor.

The catalysed reaction is (S)-ureidoglycolate = urea + glyoxylate. Its pathway is nitrogen metabolism; (S)-allantoin degradation. In terms of biological role, catalyzes the catabolism of the allantoin degradation intermediate (S)-ureidoglycolate, generating urea and glyoxylate. Involved in the utilization of allantoin as nitrogen source. The protein is Ureidoglycolate lyase 1 of Rhizobium meliloti (strain 1021) (Ensifer meliloti).